The following is a 325-amino-acid chain: NADH-quinone oxidoreductase subunit H (325 aa).

Helical transmembrane passes span 11–31 (ILLTVLKAVVILLVVVTCGAF), 81–101 (VIFTLAPMIAFTSLLLAFAIV), 114–134 (IGILFFLMMAGLAVYAVLFAG), 154–174 (LSYEVFLGLSLMGVVAQAGSF), 186–206 (VWNVIPQFFGFITFAIAGVAV), 237–257 (FFVGEYIGIVTISALMVTLFF), 265–285 (LPPFIWFALKTAFFMMMFILI), and 304–324 (ICLPLTLINLLVTAAVILWQA).

It belongs to the complex I subunit 1 family. As to quaternary structure, NDH-1 is composed of 13 different subunits. Subunits NuoA, H, J, K, L, M, N constitute the membrane sector of the complex.

The protein resides in the cell inner membrane. The catalysed reaction is a quinone + NADH + 5 H(+)(in) = a quinol + NAD(+) + 4 H(+)(out). Its function is as follows. NDH-1 shuttles electrons from NADH, via FMN and iron-sulfur (Fe-S) centers, to quinones in the respiratory chain. The immediate electron acceptor for the enzyme in this species is believed to be ubiquinone. Couples the redox reaction to proton translocation (for every two electrons transferred, four hydrogen ions are translocated across the cytoplasmic membrane), and thus conserves the redox energy in a proton gradient. This subunit may bind ubiquinone. This is NADH-quinone oxidoreductase subunit H from Escherichia coli O45:K1 (strain S88 / ExPEC).